We begin with the raw amino-acid sequence, 248 residues long: Flavodoxin/ferredoxin--NADP reductase (248 aa).

In terms of domain architecture, FAD-binding FR-type spans 2–101; the sequence is ADWVTGKVTK…SEAAGFFVLD (100 aa). Aspartate 17 is an NADP(+) binding site. FAD is bound by residues 50–53, tyrosine 66, 74–76, and threonine 116; these read RAYS and KLS. NADP(+) contacts are provided by residues 143 to 144, 173 to 174, arginine 184, 214 to 216, and aspartate 220; these read AR, SR, and NPQ. An FAD-binding site is contributed by 247-248; it reads YW.

It belongs to the ferredoxin--NADP reductase type 1 family. As to quaternary structure, monomer. FAD is required as a cofactor.

Its subcellular location is the cytoplasm. It carries out the reaction 2 reduced [2Fe-2S]-[ferredoxin] + NADP(+) + H(+) = 2 oxidized [2Fe-2S]-[ferredoxin] + NADPH. The enzyme catalyses reduced [flavodoxin] + NADP(+) = oxidized [flavodoxin] + NADPH + 2 H(+). Transports electrons between flavodoxin or ferredoxin and NADPH. Reduces flavodoxin 1, flavodoxin 2 and ferredoxin, ferredoxin being the kinetically and thermodynamically preferred partner. Required for the activation of several enzymes such as pyruvate formate-lyase, anaerobic ribonucleotide reductase and cobalamin-dependent methionine synthase. This Escherichia coli (strain K12) protein is Flavodoxin/ferredoxin--NADP reductase.